Reading from the N-terminus, the 124-residue chain is Small ribosomal subunit protein uS12 (124 aa).

Asp90 is subject to 3-methylthioaspartic acid.

It belongs to the universal ribosomal protein uS12 family. Part of the 30S ribosomal subunit. Contacts proteins S8 and S17. May interact with IF1 in the 30S initiation complex.

Its function is as follows. With S4 and S5 plays an important role in translational accuracy. In terms of biological role, interacts with and stabilizes bases of the 16S rRNA that are involved in tRNA selection in the A site and with the mRNA backbone. Located at the interface of the 30S and 50S subunits, it traverses the body of the 30S subunit contacting proteins on the other side and probably holding the rRNA structure together. The combined cluster of proteins S8, S12 and S17 appears to hold together the shoulder and platform of the 30S subunit. In Wolbachia sp. subsp. Drosophila simulans (strain wRi), this protein is Small ribosomal subunit protein uS12.